Reading from the N-terminus, the 240-residue chain is Competence protein ComFC (240 aa).

The protein belongs to the ComF/GntX family. In terms of assembly, monomer and dimer in solution. Interacts with ComFA and DprA; ComFA-ComFC form rings about 150 Angstroms in diameter with apparent 6-fold symmetry.

Its function is as follows. Involved in transformation (genetic competence for DNA uptake). The polypeptide is Competence protein ComFC (comFC) (Bacillus subtilis (strain 168)).